Consider the following 211-residue polypeptide: Claudin-1 (211 aa).

The Cytoplasmic portion of the chain corresponds to 1 to 7; it reads MANAGLQ. The chain crosses the membrane as a helical span at residues 8–28; the sequence is LLGFILASLGWIGSIVSTALP. Over 29–81 the chain is Extracellular; it reads QWKIYSYAGDNIVTAQAIYEGLWMSCVSQSTGQIQCKVFDSLLNLNSTLQATR. Cysteines 54 and 64 form a disulfide. The helical transmembrane segment at 82-102 threads the bilayer; that stretch reads ALMVIGILLGLIAIFVSTIGM. The Cytoplasmic portion of the chain corresponds to 103–115; it reads KCMRCLEDDEVQK. The chain crosses the membrane as a helical span at residues 116–136; that stretch reads MWMAVIGGIIFVISGLATLVA. The Extracellular portion of the chain corresponds to 137–163; the sequence is TAWYGNRIVQEFYDPMTPVNARYEFGQ. A helical membrane pass occupies residues 164 to 184; sequence ALFTGWAAASLCLLGGALLSC. The Cytoplasmic portion of the chain corresponds to 185–211; sequence SCPRKTTSYPTPRPYPKPTPSSGKDYV. The tract at residues 190–211 is disordered; that stretch reads TTSYPTPRPYPKPTPSSGKDYV. Residues 210–211 form an interactions with TJP1, TJP2, TJP3 and PATJ region; that stretch reads YV.

It belongs to the claudin family. As to quaternary structure, can form homo- and heteropolymers with other CLDN. Homopolymers interact with CLDN3, but not CLDN2, homopolymers. Directly interacts with TJP1/ZO-1, TJP2/ZO-2 and TJP3/ZO-3. Interacts with MPDZ and PATJ. Interacts with OCLN, CD81, CLDN4, CLDN6 and CLDN9. As to expression, detected in epididymis (at protein level). Detected in testis and epididymis.

The protein resides in the cell junction. Its subcellular location is the tight junction. It localises to the cell membrane. The protein localises to the basolateral cell membrane. Functionally, claudins function as major constituents of the tight junction complexes that regulate the permeability of epithelia. While some claudin family members play essential roles in the formation of impermeable barriers, others mediate the permeability to ions and small molecules. Often, several claudin family members are coexpressed and interact with each other, and this determines the overall permeability. CLDN1 is required to prevent the paracellular diffusion of small molecules through tight junctions in the epidermis and is required for the normal barrier function of the skin. Required for normal water homeostasis and to prevent excessive water loss through the skin, probably via an indirect effect on the expression levels of other proteins, since CLDN1 itself seems to be dispensable for water barrier formation in keratinocyte tight junctions. The sequence is that of Claudin-1 (Cldn1) from Rattus norvegicus (Rat).